We begin with the raw amino-acid sequence, 124 residues long: Small ribosomal subunit protein uS11 (124 aa).

It belongs to the universal ribosomal protein uS11 family. Part of the 30S ribosomal subunit. Interacts with proteins S7 and S18. Binds to IF-3.

Its function is as follows. Located on the platform of the 30S subunit, it bridges several disparate RNA helices of the 16S rRNA. Forms part of the Shine-Dalgarno cleft in the 70S ribosome. The protein is Small ribosomal subunit protein uS11 of Sulfurovum sp. (strain NBC37-1).